The sequence spans 113 residues: U11-theraphotoxin-Hhn1a (113 aa).

Residues 1-21 form the signal peptide; the sequence is MNTVRVTFLLVFVLAVSLGQA. The propeptide occupies 22–74; it reads DKDENRMEMQEKTEQGKSYLDFAENLLLQKLEELVAKLLEEDSEESRNSRQKR. 3 disulfide bridges follow: Cys75–Cys90, Cys82–Cys95, and Cys89–Cys110.

The protein belongs to the neurotoxin 14 (magi-1) family. 01 (HNTX-16) subfamily. As to expression, expressed by the venom gland.

It localises to the secreted. Probable ion channel inhibitor. This Cyriopagopus hainanus (Chinese bird spider) protein is U11-theraphotoxin-Hhn1a.